The primary structure comprises 501 residues: ADP,ATP carrier protein 3 (501 aa).

12 helical membrane passes run 23-43, 59-79, 90-110, 146-166, 183-203, 227-247, 293-313, 326-346, 361-381, 383-403, 446-466, and 470-490; these read LKLF…FGAL, IISF…TILY, YIFY…AYII, YALM…LMFW, PVLG…LVFF, IMLQ…MFLF, IALL…PWKA, VNFM…FMII, LLTP…IIFI, EIGT…VGAI, FGKS…PTAT, and IIIY…WNII.

Belongs to the ADP/ATP translocase tlc family.

The protein localises to the cell membrane. Functionally, provides the rickettsial cell with host ATP in exchange for rickettsial ADP. This is an obligate exchange system. This energy acquiring activity is an important component of rickettsial parasitism. This is ADP,ATP carrier protein 3 (tlcC) from Rickettsia prowazekii (strain Madrid E).